A 166-amino-acid polypeptide reads, in one-letter code: Signal peptidase complex catalytic subunit SEC11 (166 aa).

Residues 1-9 (MNIRQQLTQ) are Cytoplasmic-facing. A helical; Signal-anchor for type II membrane protein transmembrane segment spans residues 10-30 (LLTLGYVFASAFMLWKTLSVV). Residues 31–166 (ANLHSPIVVV…LGLSSLFSNE (136 aa)) lie on the Lumenal side of the membrane. Residues Ser-44, His-83, and Asp-108 each act as charge relay system in the active site. The interval 152-163 (GLLGLLGLSSLF) is C-terminal short (CTS) helix.

This sequence belongs to the peptidase S26B family. Component of the signal peptidase complex (SPC) composed of a catalytic subunit SEC11 and three accessory subunits SPC1, SPC2 and SPC3. The complex induces a local thinning of the ER membrane which is used to measure the length of the signal peptide (SP) h-region of protein substrates. This ensures the selectivity of the complex towards h-regions shorter than 18-20 amino acids. SPC associates with the translocon complex.

The protein resides in the endoplasmic reticulum membrane. The enzyme catalyses Cleavage of hydrophobic, N-terminal signal or leader sequences from secreted and periplasmic proteins.. Functionally, catalytic component of the signal peptidase complex (SPC) which catalyzes the cleavage of N-terminal signal sequences from nascent proteins as they are translocated into the lumen of the endoplasmic reticulum. Specifically cleaves N-terminal signal peptides that contain a hydrophobic alpha-helix (h-region) shorter than 18-20 amino acids. In Lodderomyces elongisporus (strain ATCC 11503 / CBS 2605 / JCM 1781 / NBRC 1676 / NRRL YB-4239) (Yeast), this protein is Signal peptidase complex catalytic subunit SEC11 (SEC11).